Consider the following 525-residue polypeptide: NGFI-A-binding protein 2 (525 aa).

Residues 1–31 (MHRAPSPTAEQPPGRGDNTRRTPQPRFKASA) form a disordered region. Ser-6 carries the post-translational modification Phosphoserine. An NCD1 region spans residues 35–113 (ALPRTLGELQ…REWATNPGLF (79 aa)). A disordered region spans residues 135-238 (GTRKGSMSNG…GAGGGPDRLE (104 aa)). Residues Ser-157, Ser-159, Ser-162, and Ser-171 each carry the phosphoserine modification. Positions 212–234 (AGGGVSEGPGVGGVAAGGAGGGP) are enriched in gly residues. Positions 267 to 356 (LLKLNKKLAR…SRQVARESTY (90 aa)) are NCD2. The interval 353–384 (ESTYLSSLKGSRLHSEELGGPPLKKLKQEVGE) is necessary for nuclear localization. Residue Lys-379 forms a Glycyl lysine isopeptide (Lys-Gly) (interchain with G-Cter in SUMO1) linkage. Residues 381–416 (EVGEQSHNEIQQPPPGPESYAPPYRPSLEEDSASLS) form a disordered region. Ser-479 carries the phosphoserine modification. Residues 501–525 (APGPHPALVEGRRSSVKVEAEASRQ) form a disordered region. Basic and acidic residues predominate over residues 510–525 (EGRRSSVKVEAEASRQ). A Glycyl lysine isopeptide (Lys-Gly) (interchain with G-Cter in SUMO1); alternate cross-link involves residue Lys-517. Lys-517 is covalently cross-linked (Glycyl lysine isopeptide (Lys-Gly) (interchain with G-Cter in SUMO2); alternate).

Belongs to the NAB family. Homomultimers may associate with EGR1 bound to DNA. In terms of processing, sumoylation by EGR2 represses EGR2 transcriptional activity in hindbrain. As to expression, highly expressed in brain and thymus, and at lower levels in spleen, kidney, heart and testis. Isoform 1 is predominantly expressed in testis, whereas isoform 3 is more abundant in thymus.

The protein localises to the nucleus. Functionally, acts as a transcriptional repressor for zinc finger transcription factors EGR1 and EGR2. Isoform 2 lacks repression ability. This Mus musculus (Mouse) protein is NGFI-A-binding protein 2 (Nab2).